Here is a 119-residue protein sequence, read N- to C-terminus: Large ribosomal subunit protein bL20 (119 aa).

This sequence belongs to the bacterial ribosomal protein bL20 family.

In terms of biological role, binds directly to 23S ribosomal RNA and is necessary for the in vitro assembly process of the 50S ribosomal subunit. It is not involved in the protein synthesizing functions of that subunit. This is Large ribosomal subunit protein bL20 from Deinococcus geothermalis (strain DSM 11300 / CIP 105573 / AG-3a).